Consider the following 478-residue polypeptide: Dihydrolipoyl dehydrogenase (478 aa).

Residues 34–49 (EKYI…GGTC), Lys-58, and Gly-122 each bind FAD. Cys-49 and Cys-54 form a disulfide bridge. NAD(+) contacts are provided by residues 188 to 192 (GAGVI), Glu-211, Val-245, and 276 to 279 (AVGR). Positions 319 and 327 each coordinate FAD. His-451 serves as the catalytic Proton acceptor.

The protein belongs to the class-I pyridine nucleotide-disulfide oxidoreductase family. Homodimer. Requires FAD as cofactor.

The protein localises to the cytoplasm. The catalysed reaction is N(6)-[(R)-dihydrolipoyl]-L-lysyl-[protein] + NAD(+) = N(6)-[(R)-lipoyl]-L-lysyl-[protein] + NADH + H(+). In terms of biological role, the branched-chain alpha-keto dehydrogenase complex catalyzes the overall conversion of alpha-keto acids to acyl-CoA and CO(2). It contains multiple copies of 3 enzymatic components: branched-chain alpha-keto acid decarboxylase (E1), lipoamide acyltransferase (E2) and lipoamide dehydrogenase (E3). In Pseudomonas fluorescens, this protein is Dihydrolipoyl dehydrogenase (lpd).